A 631-amino-acid polypeptide reads, in one-letter code: Shootin-1 (631 aa).

At Met-1 the chain carries N-acetylmethionine. Ser-3 and Ser-4 each carry phosphoserine. Residues 7–353 (EKQLQLITSL…RVNQSENSVP (347 aa)) are a coiled coil. At Ser-101 the chain carries Phosphoserine; by PAK1. Ser-249 is subject to Phosphoserine. 2 disordered regions span residues 343–404 (KRVN…EVTD) and 417–508 (IKKG…KSMP). Residues 352–369 (VPPPPPPPPPLPPPPPNP) show a composition bias toward pro residues. Ser-375 carries the phosphoserine modification. A compositionally biased stretch (polar residues) spans 456–465 (LNKSTSSRSL). Ser-473 carries the post-translational modification Phosphoserine. The residue at position 487 (Thr-487) is a Phosphothreonine. The span at 490 to 505 (ADSSSPTGILATSESK) shows a compositional bias: polar residues. The residue at position 494 (Ser-494) is a Phosphoserine. Residue Thr-496 is modified to Phosphothreonine. 2 positions are modified to phosphoserine: Ser-506 and Ser-515. The disordered stretch occupies residues 530–631 (FNNPCPLTPE…KTGETDSSNC (102 aa)). Thr-537 carries the phosphothreonine modification. Positions 590 to 602 (PQTKDQAAEKDPT) are enriched in basic and acidic residues.

It belongs to the shootin family. Interacts with L1CAM; this interaction occurs at axonal growth cones. Interacts with actin filament retrograde flow; this interaction is enhanced in a netrin-1- and PAK1-dependent manner and promotes F-actin-substrate coupling and concomitant formation of traction forces at axonal growth cones. Interacts with RUFY3. Interacts with PFN2. Interacts (via N-terminus) with KIF20B; this interaction is direct and promotes the association of SHTN1 to microtubules in primary neurons. Associates with microtubule. Post-translationally, phosphorylated on Ser-101 and Ser-249 by PAK1 through a CDC42- and RAC1-dependent signaling pathway, which enhances its association with F-actin retrograde flow in filopodia and lamellipodia of axonal growth cones. Phosphorylation on Ser-101 and Ser-249 is increased by netrin-1. As to expression, expressed in hippocampal neurons.

It localises to the perikaryon. The protein resides in the cell projection. Its subcellular location is the axon. The protein localises to the growth cone. It is found in the cytoplasm. It localises to the cytoskeleton. The protein resides in the filopodium. Its subcellular location is the lamellipodium. Functionally, involved in the generation of internal asymmetric signals required for neuronal polarization and neurite outgrowth. Mediates netrin-1-induced F-actin-substrate coupling or 'clutch engagement' within the axon growth cone through activation of CDC42, RAC1 and PAK1-dependent signaling pathway, thereby converting the F-actin retrograde flow into traction forces, concomitantly with filopodium extension and axon outgrowth. Plays a role in cytoskeletal organization by regulating the subcellular localization of phosphoinositide 3-kinase (PI3K) activity at the axonal growth cone. Also plays a role in regenerative neurite outgrowth. In the developing cortex, cooperates with KIF20B to promote both the transition from the multipolar to the bipolar stage and the radial migration of cortical neurons from the ventricular zone toward the superficial layer of the neocortex. Involved in the accumulation of phosphatidylinositol 3,4,5-trisphosphate (PIP3) in the growth cone of primary hippocampal neurons. The polypeptide is Shootin-1 (Mus musculus (Mouse)).